We begin with the raw amino-acid sequence, 283 residues long: Non-selective voltage-gated ion channel VDAC3 (283 aa).

The residue at position 2 (Cys-2) is an N-acetylcysteine. A Phosphothreonine modification is found at Thr-4. Residues Lys-12, Lys-15, and Lys-20 each carry the N6-acetyllysine modification. 2 consecutive transmembrane segments (beta stranded) span residues 26 to 35 (MVKIDLRTKS) and 39 to 47 (VEFSTSGHA). Lys-53 is covalently cross-linked (Glycyl lysine isopeptide (Lys-Gly) (interchain with G-Cter in ubiquitin)). The next 3 membrane-spanning stretches (beta stranded) occupy residues 54-64 (ASGNLETKYKI), 69-76 (LTFTQKWN), and 80-89 (TLGTEISWEN). Lys-90 is subject to N6-acetyllysine. A beta stranded membrane pass occupies residues 95 to 104 (LKLTLDTIFV). Residues Lys-109 and Lys-110 each participate in a glycyl lysine isopeptide (Lys-Gly) (interchain with G-Cter in ubiquitin) cross-link. 10 beta stranded membrane passes run 111 to 120 (SGKLKASYKR), 123 to 130 (FSLGSNVD), 137 to 145 (TIYGWAVLA), 150 to 158 (LAGYQMSFD), 163 to 175 (KLSQ…GYKA), 178 to 185 (FQLHTHVN), 189 to 198 (EFGGSIYQKV), 202 to 211 (IETSINLAWT), 218 to 227 (RFGIAAKYKL), and 231 to 238 (TSLSAKVN). Position 241 is a phosphoserine (Ser-241). NAD(+) contacts are provided by residues 242–244 (LIG) and 260–264 (SALID). A run of 2 beta stranded transmembrane segments spans residues 242–251 (LIGLGYTQTL) and 254–263 (GVKLTLSALI). Lys-266 carries the N6-acetyllysine; alternate modification. A Glycyl lysine isopeptide (Lys-Gly) (interchain with G-Cter in ubiquitin); alternate cross-link involves residue Lys-266. Residues 273-282 (HKVGLGFELE) form a beta stranded membrane-spanning segment.

It belongs to the eukaryotic mitochondrial porin family. Interacts with ARMC12 in a TBC1D21-dependent manner. Interacts with MISFA. In terms of processing, ubiquitinated by PRKN during mitophagy, leading to its degradation and enhancement of mitophagy. Deubiquitinated by USP30.

The protein resides in the mitochondrion outer membrane. The protein localises to the membrane. It catalyses the reaction chloride(in) = chloride(out). The enzyme catalyses K(+)(in) = K(+)(out). Functionally, non-selective voltage-gated ion channel that mediates the transport of anions and cations through the mitochondrion outer membrane and plasma membrane. Forms a high-conducting channel with a stable open state and a voltage-induced closure with a mild preference for anions over cations. Involved in male fertility and sperm mitochondrial sheath formation. This is Non-selective voltage-gated ion channel VDAC3 from Bos taurus (Bovine).